We begin with the raw amino-acid sequence, 806 residues long: Integrin beta-7 (806 aa).

A signal peptide spans 1–19 (MVDSSTVLIFLLVLGGGQS). The Extracellular segment spans residues 20 to 724 (ELDTKITSSG…PQEKGVDHTR (705 aa)). One can recognise a PSI domain in the interval 44–92 (SCQPVPSCQKCILSHPSCAWCKQLNFTASGEAEARRCARREELLARGCP). 26 disulfide bridges follow: Cys-51/Cys-476, Cys-54/Cys-80, Cys-64/Cys-91, Cys-216/Cys-223, Cys-271/Cys-311, Cys-412/Cys-428, Cys-448/Cys-474, Cys-478/Cys-497, Cys-488/Cys-500, Cys-502/Cys-511, Cys-513/Cys-545, Cys-527/Cys-543, Cys-537/Cys-548, Cys-550/Cys-559, Cys-561/Cys-582, Cys-566/Cys-580, Cys-574/Cys-585, Cys-587/Cys-596, Cys-598/Cys-621, Cys-605/Cys-619, Cys-613/Cys-624, Cys-626/Cys-635, Cys-638/Cys-641, Cys-645/Cys-688, Cys-651/Cys-670, and Cys-654/Cys-666. Asn-68 is a glycosylation site (N-linked (GlcNAc...) asparagine). The span at 98-107 (EPRGRQEVLQ) shows a compositional bias: basic and acidic residues. The disordered stretch occupies residues 98–123 (EPRGRQEVLQDKPLSQGDRGEGATQL). Residues 150–389 (YPVDLYYLMD…QLIMDAYDSL (240 aa)) form the VWFA domain. Mg(2+) is bound by residues Ser-161 and Ser-163. The Ca(2+) site is built by Ser-163, Asp-166, Asp-167, and Asp-198. Asn-250 carries N-linked (GlcNAc...) asparagine glycosylation. Positions 254, 256, 258, and 259 each coordinate Ca(2+). Glu-259 contributes to the Mg(2+) binding site. Asn-279 is a glycosylation site (N-linked (GlcNAc...) asparagine). Positions 289 and 373 each coordinate Ca(2+). N-linked (GlcNAc...) asparagine glycosylation is present at Asn-434. I-EGF domains lie at 478 to 512 (CGDA…QLCE), 513 to 560 (CSEA…RLCE), 561 to 597 (CDDA…RACE), and 598 to 636 (CSKS…ALCD). Asn-531 carries an N-linked (GlcNAc...) asparagine glycan. Asn-590 carries N-linked (GlcNAc...) asparagine glycosylation. N-linked (GlcNAc...) asparagine glycans are attached at residues Asn-665 and Asn-674. A helical transmembrane segment spans residues 725–745 (AIILGCTGGIVAVGLGLVLAY). At 746-806 (RLSVEIYDRR…PSLSLTREAD (61 aa)) the chain is on the cytoplasmic side. Positions 786–806 (NPRFQGTNGRSPSLSLTREAD) are disordered.

The protein belongs to the integrin beta chain family. Heterodimer of an alpha and a beta subunit. ITGB7/beta-7 associates with either ITGA4/alpha-4 or ITGAE/alpha-E. Integrin ITGA4/ITGB7 interacts with MADCAM1. Integrin ITGA4/ITGB7 interacts with VCAM1 and fibronectin. Interacts with FLNA (via filamin repeats 4, 9, 12, 17, 19, 21, and 23).

It is found in the cell membrane. Integrin ITGA4/ITGB7 (alpha-4/beta-7) (Peyer patches-specific homing receptor LPAM-1) is an adhesion molecule that mediates lymphocyte migration and homing to gut-associated lymphoid tissue (GALT). Integrin ITGA4/ITGB7 interacts with the cell surface adhesion molecules MADCAM1 which is normally expressed by the vascular endothelium of the gastrointestinal tract. Also interacts with VCAM1 and fibronectin, an extracellular matrix component. It recognizes one or more domains within the alternatively spliced CS-1 region of fibronectin. Interactions involve the tripeptide L-D-T in MADCAM1, and L-D-V in fibronectin. Integrin ITGAE/ITGB7 (alpha-E/beta-7, HML-1) is a receptor for E-cadherin. This chain is Integrin beta-7 (Itgb7), found in Mus musculus (Mouse).